Consider the following 89-residue polypeptide: Small ribosomal subunit protein uS14 (89 aa).

It belongs to the universal ribosomal protein uS14 family. Part of the 30S ribosomal subunit. Contacts proteins S3 and S10.

Binds 16S rRNA, required for the assembly of 30S particles and may also be responsible for determining the conformation of the 16S rRNA at the A site. This is Small ribosomal subunit protein uS14 from Chlorobium limicola (strain DSM 245 / NBRC 103803 / 6330).